An 85-amino-acid chain; its full sequence is N.vectensis toxin 1 4 (85 aa).

A signal peptide spans 1-20; that stretch reads MASFKIVIVCLALLVAVASA. Positions 21–36 are excised as a propeptide; it reads RRRDMMSDDELDYHYS. 3 disulfide bridges follow: Cys-42-Cys-82, Cys-44-Cys-72, and Cys-65-Cys-83.

The protein belongs to the sea anemone sodium channel inhibitory toxin family. Type II subfamily. Expressed in ectodermal glands and in clumps outside of the extodermal layer. Is not expressed in nematocytes. In adult female tissues, shows similar expression levels in mesenteries (gametes-producing tissue), tentacles, pharynx and physa.

It is found in the secreted. In terms of biological role, binds to site 3 of voltage-gated sodium channels and inhibits the inactivation process. Is highly active on DmNav1/TipE (drosophila) and is only extremely weakly active on rat Nav1.4-beta-1/SCN4A-SCN1B, and on human Nav1.5-beta-1/SCN5A-beta-1. This reveals high specificity for arthropod over mammalian channels. In vivo, when released into the medium, this recombinant toxin induces impaired swimming, paralysis and death of the crustacean A.nauplii within several hours. Also causes paralysis of cherry shrimps immediately after injection at very low doses. Its effect on zebrafish (D.rerio) larvae is also rapid, since it induces tail twitching accompanied by impaired swimming after 20 minutes and complete paralysis within 45 minutes. It has also been observed to cause death of zebrafish larvae within 1 hour. The sequence is that of N.vectensis toxin 1 4 from Nematostella vectensis (Starlet sea anemone).